Reading from the N-terminus, the 655-residue chain is E3 ubiquitin-protein ligase TRIM32 (655 aa).

The segment at 21-66 (CPICMESFTEEQLRPKLLHCGHTICRQCLEKLLASSINGVRCPFCS) adopts an RING-type zinc-finger fold. Serine 56 carries the post-translational modification Phosphoserine; by CHEK2. Residues 96–139 (VGLLMCRGCGRRLPRQFCRSCGVVLCEPCREADHQPPGHCTLPV) form a B box-type; atypical zinc finger. Zn(2+) is bound by residues cysteine 101, cysteine 104, cysteine 124, and histidine 129. A coiled-coil region spans residues 139 to 198 (VKEAAEERRRDFGEKLTRLRELTGELQRRKAALEGVSRDLQARYKAVLQEYGHEERRIQE). The segment at 327 to 347 (MDMSPEEVAPSPRASPAKQRS) is disordered. Residues serine 330, serine 337, and serine 341 each carry the phosphoserine modification. NHL repeat units lie at residues 360–403 (LKKM…FNRK), 417–460 (DSFV…YTMD), 461–501 (GHCV…FTVD), 564–607 (GRQI…FPKG), and 608–648 (GGYS…YSYH).

This sequence belongs to the TRIM/RBCC family. As to quaternary structure, it self-associates. Interacts with DTNBP1. Interacts with PIAS4/PIASY upon treatment with UVB and TNF-alpha. Interacts with AMBRA1; promoting activation of ULK1 through unanchored 'Lys-63'-linked polyubiquitin chains. Interacts with TICAM1 and TAX1BP1; these interactions target TICAM1 to TAX1BP1-mediated selective autophagic degradation. Post-translationally, ubiquitinated. Phosphorylation at Ser-56 by CHEK2 under oxidative stress, activates the E3 ligase activity and promotes ATG7 ubiquitination leading to positive regulation of the autophagosme assembly. In terms of tissue distribution, ubiquitous. High expression in brain.

The protein localises to the cytoplasm. It catalyses the reaction S-ubiquitinyl-[E2 ubiquitin-conjugating enzyme]-L-cysteine + [acceptor protein]-L-lysine = [E2 ubiquitin-conjugating enzyme]-L-cysteine + N(6)-ubiquitinyl-[acceptor protein]-L-lysine.. It functions in the pathway protein modification; protein ubiquitination. E3 ubiquitin ligase that plays a role in various biological processes including neural stem cell differentiation, innate immunity, inflammatory resonse and autophagy. Plays a role in virus-triggered induction of IFN-beta and TNF-alpha by mediating the ubiquitination of STING1. Mechanistically, targets STING1 for 'Lys-63'-linked ubiquitination which promotes the interaction of STING1 with TBK1. Regulates bacterial clearance and promotes autophagy in Mycobacterium tuberculosis-infected macrophages. Negatively regulates TLR3/4-mediated innate immune and inflammatory response by triggering the autophagic degradation of TICAM1 in an E3 activity-independent manner. Plays an essential role in oxidative stress induced cell death by inducing loss of transmembrane potential and enhancing mitochondrial reactive oxygen species (ROS) production during oxidative stress conditions. Ubiquitinates XIAP and targets it for proteasomal degradation. Ubiquitinates DTNBP1 (dysbindin) and promotes its degradation. May ubiquitinate BBS2. Ubiquitinates PIAS4/PIASY and promotes its degradation in keratinocytes treated with UVB and TNF-alpha. Also acts as a regulator of autophagy by mediating formation of unanchored 'Lys-63'-linked polyubiquitin chains that activate ULK1: interaction with AMBRA1 is required for ULK1 activation. Positively regulates dendritic branching by promoting ubiquitination and subsequent degradation of the epigenetic factor CDYL. Under metabolic stress and phosphorylation by CHK2, mediates 'Lys-63'-linked ubiquitination of ATG7 at 'Lys-41' to initiate autophagy. The polypeptide is E3 ubiquitin-protein ligase TRIM32 (Mus musculus (Mouse)).